We begin with the raw amino-acid sequence, 313 residues long: Putative phosphoribosylaminoimidazole-succinocarboxamide synthase 2 (313 aa).

This sequence belongs to the SAICAR synthetase family.

The enzyme catalyses 5-amino-1-(5-phospho-D-ribosyl)imidazole-4-carboxylate + L-aspartate + ATP = (2S)-2-[5-amino-1-(5-phospho-beta-D-ribosyl)imidazole-4-carboxamido]succinate + ADP + phosphate + 2 H(+). It participates in purine metabolism; IMP biosynthesis via de novo pathway; 5-amino-1-(5-phospho-D-ribosyl)imidazole-4-carboxamide from 5-amino-1-(5-phospho-D-ribosyl)imidazole-4-carboxylate: step 1/2. The protein is Putative phosphoribosylaminoimidazole-succinocarboxamide synthase 2 (purC2) of Mesorhizobium japonicum (strain LMG 29417 / CECT 9101 / MAFF 303099) (Mesorhizobium loti (strain MAFF 303099)).